The sequence spans 307 residues: DDRGK domain-containing protein 1 (307 aa).

Over 1 to 2 the chain is Lumenal; it reads MD. Residues 3–23 form a helical membrane-spanning segment; sequence LILLVGIATALLLILITLYFL. Over 24 to 307 the chain is Cytoplasmic; that stretch reads QSKNAKTETK…TPVAAGESSA (284 aa). Positions 31–175 are disordered; sequence ETKAAAQPQR…EADRLAKEER (145 aa). Over residues 52–83 the composition is skewed to low complexity; the sequence is RRAQIARNQRNRLRQNQNAPAVAAAAAPAAAV. The segment covering 107–175 has biased composition (basic and acidic residues); the sequence is LDEKMGAKKR…EADRLAKEER (69 aa).

Belongs to the DDRGK1 family. In terms of assembly, interacts with Atg9; the interaction is transient.

The protein localises to the endoplasmic reticulum membrane. Functionally, substrate adapter for ufmylation, the covalent attachment of the ubiquitin-like modifier UFM1 to substrate proteins. Required for ufmylation of Atg9; protects the nervous system during aging, possibly by stabilizing Atg9 and supporting its function. This is DDRGK domain-containing protein 1 from Drosophila virilis (Fruit fly).